The sequence spans 414 residues: 2-epi-5-epi-valiolone synthase (414 aa).

NAD(+)-binding positions include aspartate 70, 101–104 (ESAK), 134–138 (GVLTD), 158–159 (TT), lysine 171, lysine 180, and 198–201 (FLAT). Lysine 171 is an active-site residue. Zn(2+) is bound by residues glutamate 213, histidine 284, and histidine 300.

The protein belongs to the sugar phosphate cyclases superfamily. EEVS family. NAD(+) serves as cofactor. The cofactor is Zn(2+).

The enzyme catalyses D-sedoheptulose 7-phosphate = 2-epi-5-epi-valiolone + phosphate. It participates in antibiotic biosynthesis. Functionally, catalyzes the cyclization of D-sedoheptulose 7-phosphate to 2-epi-5-epi-valiolone. Involved in validamycin biosynthesis. The sequence is that of 2-epi-5-epi-valiolone synthase from Streptomyces hygroscopicus subsp. jinggangensis (strain 5008).